Reading from the N-terminus, the 982-residue chain is Nitrate reductase [NADPH] (982 aa).

The disordered stretch occupies residues 1-128 (MEAPALEQRQ…PPSTRLTTIL (128 aa)). The segment covering 10–20 (QSLHDSSERQQ) has biased composition (basic and acidic residues). Low complexity predominate over residues 63–110 (TASPTTTDFSSSSSDDNSTTLETSVNYSHSSNTNTNTSCPPSPITSSS). Cysteine 240 lines the Mo-molybdopterin pocket. A Cytochrome b5 heme-binding domain is found at 617–692 (TRLITLEELR…MPTYHIGTLT (76 aa)). Heme-binding residues include histidine 652 and histidine 675. The FAD-binding FR-type domain maps to 721–836 (KTWNSAILTF…KGPVGKFVYQ (116 aa)). Residues 776–779 (RAYT), 794–798 (LVKIY), 810–812 (QMT), serine 860, and threonine 863 each bind FAD. 952–961 (MVLLCGPEGM) contacts NADP(+).

The protein belongs to the nitrate reductase family. In terms of assembly, homodimer. FAD serves as cofactor. Requires heme as cofactor. Mo-molybdopterin is required as a cofactor.

It catalyses the reaction nitrite + NADP(+) + H2O = nitrate + NADPH + H(+). The protein operates within nitrogen metabolism; nitrate reduction (assimilation). Functionally, nitrate reductase is a key enzyme involved in the first step of nitrate assimilation in plants, fungi and bacteria. The chain is Nitrate reductase [NADPH] (nit-3) from Neurospora crassa (strain ATCC 24698 / 74-OR23-1A / CBS 708.71 / DSM 1257 / FGSC 987).